The following is a 164-amino-acid chain: Cytochrome c-type biogenesis protein CcmE (164 aa).

Over 1–8 the chain is Cytoplasmic; the sequence is MNPRRQKR. A helical; Signal-anchor for type II membrane protein membrane pass occupies residues 9–29; that stretch reads LIVISAIVLVIGAAIGLMLYA. The Periplasmic portion of the chain corresponds to 30–164; sequence LSQNIDLFYT…QAYSTPKVSG (135 aa). Residues His132 and Tyr136 each contribute to the heme site.

This sequence belongs to the CcmE/CycJ family.

The protein resides in the cell inner membrane. In terms of biological role, heme chaperone required for the biogenesis of c-type cytochromes. Transiently binds heme delivered by CcmC and transfers the heme to apo-cytochromes in a process facilitated by CcmF and CcmH. The protein is Cytochrome c-type biogenesis protein CcmE of Pseudoalteromonas atlantica (strain T6c / ATCC BAA-1087).